Reading from the N-terminus, the 156-residue chain is Cell division protein SepF (156 aa).

The segment at 17–44 (PETADYYEDQQPAQQAPAPVPTPAPTRS) is disordered.

It belongs to the SepF family. As to quaternary structure, homodimer. Interacts with FtsZ.

The protein localises to the cytoplasm. In terms of biological role, cell division protein that is part of the divisome complex and is recruited early to the Z-ring. Probably stimulates Z-ring formation, perhaps through the cross-linking of FtsZ protofilaments. Its function overlaps with FtsA. This is Cell division protein SepF from Limosilactobacillus fermentum (strain NBRC 3956 / LMG 18251) (Lactobacillus fermentum).